Reading from the N-terminus, the 1357-residue chain is Mediator of RNA polymerase II transcription subunit 13 (1357 aa).

Disordered regions lie at residues 356 to 391 (SCNYGPASRTKLTPSKAQDLRRSAAPLSADSFGNGF) and 420 to 487 (DLWN…HRKE). Positions 435–451 (INPTSQQGDSARITSGS) are enriched in polar residues.

Belongs to the Mediator complex subunit 13 family. Component of the SRB8-11 complex, which itself associates with the Mediator complex.

It is found in the nucleus. Component of the SRB8-11 complex. The SRB8-11 complex is a regulatory module of the Mediator complex which is itself involved in regulation of basal and activated RNA polymerase II-dependent transcription. The SRB8-11 complex may be involved in the transcriptional repression of a subset of genes regulated by Mediator. It may inhibit the association of the Mediator complex with RNA polymerase II to form the holoenzyme complex. This is Mediator of RNA polymerase II transcription subunit 13 (SSN2) from Eremothecium gossypii (strain ATCC 10895 / CBS 109.51 / FGSC 9923 / NRRL Y-1056) (Yeast).